The chain runs to 1218 residues: Thrombospondin type 1 domain-containing protein (1218 aa).

Disordered stretches follow at residues 82 to 101 (SAGF…PCSS), 189 to 240 (SLEE…SRTR), 298 to 383 (HTAN…VNGL), and 445 to 471 (GGKS…SHRG). The span at 201–210 (GYEEERERRS) shows a compositional bias: basic and acidic residues. The segment covering 315–375 (SSRFTSKASS…SSPLSSSPDS (61 aa)) has biased composition (low complexity). Positions 638 to 704 (SCITGPWSEW…RRKCNLGACP (67 aa)) constitute a TSP type-1 domain. Residues 886-906 (GVSHLWISLCAGAVAAVVFLV) traverse the membrane as a helical segment. The interval 1129–1153 (RRRARRGRREGDSGEGGDCGEARKA) is disordered.

Component of a complex, at least composed of cysteine repeat modular protein A (CRMPa), cysteine repeat modular protein B (CRMPb), micronemal protein 15 (MIC15) and thrombospondin type 1 domain-containing protein (TSP1).

It is found in the membrane. Its function is as follows. Required for rhoptry secretion. Plays a role in host cell invasion. The chain is Thrombospondin type 1 domain-containing protein from Toxoplasma gondii.